A 299-amino-acid polypeptide reads, in one-letter code: Putative cuticle collagen 155 (299 aa).

The signal sequence occupies residues 1-27 (MEFEQRIKAYRFVAYSAVAFSVVAVLS). Triple-helical region stretches follow at residues 103-132 (GAAGPAGTPGKPGRPGKPGAPGLPGNPGHP), 151-177 (GPPGPPGPPGPSGDAGGNGNPGSPGQD), 181-202 (GAPGNKGPSGPNGNPGAPGAPG), and 216-278 (GAPG…VGEK). Residues 107 to 278 (PAGTPGKPGR…SGTPGGVGEK (172 aa)) form a disordered region. Pro residues predominate over residues 129–161 (PGHPPQQPCDPITPPPCQPCPQGPPGPPGPPGP). A compositionally biased stretch (gly residues) spans 163-172 (GDAGGNGNPG). Residues 173-197 (SPGQDGQPGAPGNKGPSGPNGNPGA) are compositionally biased toward low complexity. The span at 215 to 233 (PGAPGPQGTPGPQGPPGQP) shows a compositional bias: pro residues. A compositionally biased stretch (low complexity) spans 250-268 (PNGNPGQPGADGNPGAPGQ).

This sequence belongs to the cuticular collagen family. As to quaternary structure, collagen polypeptide chains are complexed within the cuticle by disulfide bonds and other types of covalent cross-links.

Nematode cuticles are composed largely of collagen-like proteins. The cuticle functions both as an exoskeleton and as a barrier to protect the worm from its environment. In Caenorhabditis elegans, this protein is Putative cuticle collagen 155 (col-155).